The chain runs to 474 residues: Glutathione synthetase (474 aa).

Ala-2 bears the N-acetylalanine mark. Substrate is bound at residue Arg-125. ATP is bound at residue Glu-144. Residues Glu-144 and Asn-146 each coordinate Mg(2+). Substrate-binding positions include 148–151, 214–216, Gln-220, and 267–270; these read ISAS, ERN, and RDGY. Residues Lys-305, 364–373, Tyr-375, and 398–401 each bind ATP; these read KPQREGGGNN and MEKI. Glu-368 contacts Mg(2+). Position 415 is a phosphoserine (Ser-415). Glu-425 is a binding site for ATP. Residue Arg-450 coordinates substrate. Lys-452 and Asp-458 together coordinate ATP. Residue 461–462 participates in substrate binding; the sequence is VA.

The protein belongs to the eukaryotic GSH synthase family. Homodimer. Requires Mg(2+) as cofactor.

The enzyme catalyses gamma-L-glutamyl-L-cysteine + glycine + ATP = glutathione + ADP + phosphate + H(+). The catalysed reaction is gamma-L-glutamyl-(2S)-2-aminobutanoate + glycine + ATP = ophthalmate + ADP + phosphate + H(+). The protein operates within sulfur metabolism; glutathione biosynthesis; glutathione from L-cysteine and L-glutamate: step 2/2. In terms of biological role, catalyzes the production of glutathione from gamma-glutamylcysteine and glycine in an ATP-dependent manner. Glutathione (gamma-glutamylcysteinylglycine, GSH) is the most abundant intracellular thiol in living aerobic cells and is required for numerous processes including the protection of cells against oxidative damage, amino acid transport, the detoxification of foreign compounds, the maintenance of protein sulfhydryl groups in a reduced state and acts as a cofactor for a number of enzymes. Participates in ophthalmate biosynthesis in hepatocytes. In Mus musculus (Mouse), this protein is Glutathione synthetase.